A 515-amino-acid polypeptide reads, in one-letter code: Lysine--tRNA ligase (515 aa).

Residues Glu-425 and Glu-432 each contribute to the Mg(2+) site.

This sequence belongs to the class-II aminoacyl-tRNA synthetase family. Homodimer. It depends on Mg(2+) as a cofactor.

The protein localises to the cytoplasm. The enzyme catalyses tRNA(Lys) + L-lysine + ATP = L-lysyl-tRNA(Lys) + AMP + diphosphate. The sequence is that of Lysine--tRNA ligase from Cupriavidus metallidurans (strain ATCC 43123 / DSM 2839 / NBRC 102507 / CH34) (Ralstonia metallidurans).